A 198-amino-acid polypeptide reads, in one-letter code: Ribonuclease HII (198 aa).

The region spanning 11–198 (NLIAGVDEVG…GPVKRVLGLV (188 aa)) is the RNase H type-2 domain. A divalent metal cation contacts are provided by Asp-17, Glu-18, and Asp-109.

This sequence belongs to the RNase HII family. The cofactor is Mn(2+). Mg(2+) serves as cofactor.

Its subcellular location is the cytoplasm. The catalysed reaction is Endonucleolytic cleavage to 5'-phosphomonoester.. Functionally, endonuclease that specifically degrades the RNA of RNA-DNA hybrids. The sequence is that of Ribonuclease HII from Yersinia pseudotuberculosis serotype O:1b (strain IP 31758).